We begin with the raw amino-acid sequence, 2758 residues long: Highly reducing polyketide synthase NEC1 (2758 aa).

The region spanning 153 to 492 (EASSPIIGLD…GSNAHVVMDD (340 aa)) is the Ketosynthase family 3 (KS3) domain. Residues 512–576 (PRLPGSSSSR…NTDTLQTTDT (65 aa)) form a disordered region. A compositionally biased stretch (low complexity) spans 566-576 (TNTDTLQTTDT). The interval 700 to 1044 (VFTGQGAQWP…GYATVLKRGD (345 aa)) is malonyl-CoA:ACP transacylase (MAT) domain. Ser790 (for malonyltransferase activity) is an active-site residue. The tract at residues 1124-1255 (HELLGAPVPD…GFVRTEYSQT (132 aa)) is N-terminal hotdog fold. Residues 1124–1442 (HELLGAPVPD…VFKTIPNTAS (319 aa)) are dehydratase (DH) domain. The region spanning 1124-1443 (HELLGAPVPD…FKTIPNTASS (320 aa)) is the PKS/mFAS DH domain. Catalysis depends on His1156, which acts as the Proton acceptor; for dehydratase activity. The tract at residues 1283–1443 (TSMVHADKVY…FKTIPNTASS (161 aa)) is C-terminal hotdog fold. Asp1351 (proton donor; for dehydratase activity) is an active-site residue. Residues 1622 to 1727 (LEVGGGTGGA…RKLLKPGGKL (106 aa)) are methyltransferase (CMet) domain. An enoyl reductase (ER) domain region spans residues 2031–2344 (GTADVCFSED…LGKGEDAVVL (314 aa)). A ketoreductase (KR) domain region spans residues 2372–2553 (ASYMVVGGLG…PVAVSLDLPV (182 aa)). The 78-residue stretch at 2673-2750 (EAQAVVLDAL…ALAAAVAGRS (78 aa)) folds into the Carrier domain. Ser2710 carries the post-translational modification O-(pantetheine 4'-phosphoryl)serine.

In terms of biological role, highly reducing polyketide synthase; part of the gene cluster that mediates the biosynthesis of nectriapyrone and its analogs phomopyrone A, acropyrone and zaepyrone. The nectriapyrone biosynthetic gene cluster consists of two genes, the highly reducing polyketide synthase NEC1 that produces a demethylated analog of nectriapyrone from one unit of acetyl-CoA and one unit of malonyl-CoA; and the O-methyltransferase NEC2 that further methylates the NEC1 product to yield nectriapyrone. Nectriapyrone is further hydrolyzed to nectriapyrone D, also known as gulypyrone B, by an unidentified hydrolase localized outside the nectriapyrone cluster. In Pyricularia oryzae (strain 70-15 / ATCC MYA-4617 / FGSC 8958) (Rice blast fungus), this protein is Highly reducing polyketide synthase NEC1.